A 971-amino-acid polypeptide reads, in one-letter code: uncharacterized protein (971 aa).

13 consecutive transmembrane segments (helical) span residues 11 to 31 (WLLK…GIIF), 516 to 536 (FASS…ALGI), 547 to 567 (LALA…GGVV), 569 to 589 (VFSF…LITL), 615 to 635 (FFTM…VIYL), 651 to 671 (AITS…LFVS), 727 to 747 (LLFI…LYLG), 763 to 783 (STGI…YSLP), 795 to 815 (IALI…NFIF), 817 to 837 (IDQS…FFQA), 878 to 898 (IGSS…FGGI), 900 to 920 (GTIN…SVFV), and 923 to 943 (LPLF…YVQI).

Its subcellular location is the cell membrane. This is an uncharacterized protein from Mycoplasma pneumoniae (strain ATCC 29342 / M129 / Subtype 1) (Mycoplasmoides pneumoniae).